A 466-amino-acid polypeptide reads, in one-letter code: Paraneoplastic antigen Ma3 homolog (466 aa).

A disordered region spans residues 379–408 (RPYQGSRRRRHRRRGQHRKGGVPRDDSQGT). Basic residues predominate over residues 384–399 (SRRRRHRRRGQHRKGG). The CCHC-type zinc finger occupies 415–432 (TFCYSCGEDGHIRVHCFN). The tract at residues 441-466 (QKRQAAMEKGNRSWAWEKSHPKPKTK) is disordered. Over residues 445 to 460 (AAMEKGNRSWAWEKSH) the composition is skewed to basic and acidic residues.

It belongs to the PNMA family. In terms of tissue distribution, expressed in the cerebrum and cerebellum.

Its subcellular location is the nucleus. The protein localises to the nucleolus. The sequence is that of Paraneoplastic antigen Ma3 homolog (Pnma3) from Mus musculus (Mouse).